We begin with the raw amino-acid sequence, 61 residues long: Small ribosomal subunit protein uS14B (61 aa).

Positions 24, 27, 40, and 43 each coordinate Zn(2+).

It belongs to the universal ribosomal protein uS14 family. Zinc-binding uS14 subfamily. Part of the 30S ribosomal subunit. Contacts proteins S3 and S10. The cofactor is Zn(2+).

Its function is as follows. Binds 16S rRNA, required for the assembly of 30S particles and may also be responsible for determining the conformation of the 16S rRNA at the A site. This is Small ribosomal subunit protein uS14B from Shouchella clausii (strain KSM-K16) (Alkalihalobacillus clausii).